Consider the following 260-residue polypeptide: Snake venom serine protease gussurobin (260 aa).

Residues 1–18 (MVLIRVLANLLILQLSYA) form the signal peptide. Residues 19–24 (QKSSEL) constitute a propeptide that is removed on maturation. One can recognise a Peptidase S1 domain in the interval 25–251 (IIGGDECNIN…YTEWIQSTIA (227 aa)). 6 disulfides stabilise this stretch: Cys-31–Cys-165, Cys-52–Cys-68, Cys-100–Cys-258, Cys-144–Cys-212, Cys-176–Cys-191, and Cys-202–Cys-227. Residues His-67 and Asp-112 each act as charge relay system in the active site. 2 N-linked (GlcNAc...) asparagine glycosylation sites follow: Asn-123 and Asn-124. Catalysis depends on Ser-206, which acts as the Charge relay system.

This sequence belongs to the peptidase S1 family. Snake venom subfamily. Monomer. In terms of tissue distribution, expressed by the venom gland.

The protein localises to the secreted. Its function is as follows. Snake venom serine protease that may act in the hemostasis system of the prey. The sequence is that of Snake venom serine protease gussurobin from Gloydius ussuriensis (Ussuri mamushi).